The following is a 113-amino-acid chain: U-scoloptoxin(16)-Sa1a (113 aa).

Positions 1-29 (MAPPSNPLFVVLCWALFAYLMLVLRDIQA) are cleaved as a signal peptide.

It belongs to the scoloptoxin-16 family. Post-translationally, contains 4 disulfide bonds. As to expression, expressed by the venom gland.

The protein resides in the secreted. The sequence is that of U-scoloptoxin(16)-Sa1a from Scolopendra alternans (Florida Keys giant centipede).